Consider the following 212-residue polypeptide: Probable GTP-binding protein EngB (212 aa).

The EngB-type G domain occupies 38 to 210 (SLPEIAFVGK…KASLAKCIKF (173 aa)). GTP is bound by residues 46–53 (GKSNVGKS), 73–77 (GRTRQ), 91–94 (DLPG), 158–161 (TKSD), and 189–191 (VSN). S53 and T75 together coordinate Mg(2+).

The protein belongs to the TRAFAC class TrmE-Era-EngA-EngB-Septin-like GTPase superfamily. EngB GTPase family. Mg(2+) is required as a cofactor.

Necessary for normal cell division and for the maintenance of normal septation. The polypeptide is Probable GTP-binding protein EngB (Rickettsia rickettsii (strain Sheila Smith)).